A 97-amino-acid chain; its full sequence is Class II hydrophobin 3 (97 aa).

Residues 1–16 (MKFFAAAALFIAGVLA) form the signal peptide. Intrachain disulfides connect Cys-30–Cys-79, Cys-40–Cys-70, Cys-41–Cys-53, and Cys-80–Cys-91.

The protein belongs to the cerato-ulmin hydrophobin family. Homodimer. Homodimers further self-assemble to form highly ordered films at water-air interfaces through intermolecular interactions.

It localises to the secreted. The protein localises to the cell wall. Aerial growth, conidiation, and dispersal of filamentous fungi in the environment rely upon a capability of their secreting small amphipathic proteins called hydrophobins (HPBs) with low sequence identity. Class I can self-assemble into an outermost layer of rodlet bundles on aerial cell surfaces, conferring cellular hydrophobicity that supports fungal growth, development and dispersal; whereas Class II form highly ordered films at water-air interfaces through intermolecular interactions but contribute nothing to the rodlet structure. In Trichoderma asperellum (strain ATCC 204424 / CBS 433.97 / NBRC 101777), this protein is Class II hydrophobin 3.